Reading from the N-terminus, the 56-residue chain is Large ribosomal subunit protein bL33C (56 aa).

Belongs to the bacterial ribosomal protein bL33 family.

The sequence is that of Large ribosomal subunit protein bL33C from Sorangium cellulosum (strain So ce56) (Polyangium cellulosum (strain So ce56)).